Consider the following 416-residue polypeptide: Serine hydroxymethyltransferase (416 aa).

(6S)-5,6,7,8-tetrahydrofolate is bound by residues leucine 118 and 122 to 124; that span reads GHL. Lysine 226 carries the post-translational modification N6-(pyridoxal phosphate)lysine. (6S)-5,6,7,8-tetrahydrofolate is bound by residues glutamate 242 and 350–352; that span reads SPF.

This sequence belongs to the SHMT family. Homodimer. Requires pyridoxal 5'-phosphate as cofactor.

It is found in the cytoplasm. It catalyses the reaction (6R)-5,10-methylene-5,6,7,8-tetrahydrofolate + glycine + H2O = (6S)-5,6,7,8-tetrahydrofolate + L-serine. It functions in the pathway one-carbon metabolism; tetrahydrofolate interconversion. Its pathway is amino-acid biosynthesis; glycine biosynthesis; glycine from L-serine: step 1/1. Its function is as follows. Catalyzes the reversible interconversion of serine and glycine with tetrahydrofolate (THF) serving as the one-carbon carrier. This reaction serves as the major source of one-carbon groups required for the biosynthesis of purines, thymidylate, methionine, and other important biomolecules. Also exhibits THF-independent aldolase activity toward beta-hydroxyamino acids, producing glycine and aldehydes, via a retro-aldol mechanism. The polypeptide is Serine hydroxymethyltransferase (Helicobacter hepaticus (strain ATCC 51449 / 3B1)).